Here is a 377-residue protein sequence, read N- to C-terminus: MNHSDTLSLSLELLQQPSVTPIDHTCQTIMADRLAKVGFHIEPMRFGDVDNLWARRGTEGPVFCFAGHTDVVPTGRLDAWNSDPFAPEIRDGKLYGRGSADMKTALAAMVVASERFVAKHPNHKGSIAFLITSDEEGPAVNGTVKVIETLEKRNEKITWCLVGEPSSTHKLGDIVKNGRRGSLNAVLKVQGKQGHVAYPHLARNPIHEASPALAELCQTVWDNGNEYFPATSFQISNIHAGTGATNVIPGTLEVTFNFRYSTEVTAEQLKQRVHEILDKHGLQYEIVWNLSGLPFLTPVGELVNAAQTAILNVTGTETELSTSGGTSDGRFIAPTGAQVLELGVLNATIHQINEHVDVHDLDPLTDIYEQILENLLA.

His-68 provides a ligand contact to Zn(2+). Residue Asp-70 is part of the active site. Asp-101 contacts Zn(2+). Glu-135 acts as the Proton acceptor in catalysis. Positions 136, 164, and 350 each coordinate Zn(2+).

It belongs to the peptidase M20A family. DapE subfamily. In terms of assembly, homodimer. Requires Zn(2+) as cofactor. Co(2+) is required as a cofactor.

The catalysed reaction is N-succinyl-(2S,6S)-2,6-diaminopimelate + H2O = (2S,6S)-2,6-diaminopimelate + succinate. The protein operates within amino-acid biosynthesis; L-lysine biosynthesis via DAP pathway; LL-2,6-diaminopimelate from (S)-tetrahydrodipicolinate (succinylase route): step 3/3. Its function is as follows. Catalyzes the hydrolysis of N-succinyl-L,L-diaminopimelic acid (SDAP), forming succinate and LL-2,6-diaminopimelate (DAP), an intermediate involved in the bacterial biosynthesis of lysine and meso-diaminopimelic acid, an essential component of bacterial cell walls. This Acinetobacter baumannii (strain SDF) protein is Succinyl-diaminopimelate desuccinylase.